Here is a 128-residue protein sequence, read N- to C-terminus: Small ribosomal subunit protein uS12 (128 aa).

Residues 1–25 (MPTIQQLIRRGRKTKASKTASPALE) form a disordered region. D89 bears the 3-methylthioaspartic acid mark. Residues 101-128 (SLDTSGVADRRNSRSKYGAKRPKEAAAK) form a disordered region.

It belongs to the universal ribosomal protein uS12 family. As to quaternary structure, part of the 30S ribosomal subunit. Contacts proteins S8 and S17. May interact with IF1 in the 30S initiation complex.

With S4 and S5 plays an important role in translational accuracy. In terms of biological role, interacts with and stabilizes bases of the 16S rRNA that are involved in tRNA selection in the A site and with the mRNA backbone. Located at the interface of the 30S and 50S subunits, it traverses the body of the 30S subunit contacting proteins on the other side and probably holding the rRNA structure together. The combined cluster of proteins S8, S12 and S17 appears to hold together the shoulder and platform of the 30S subunit. This Chlorobium phaeobacteroides (strain BS1) protein is Small ribosomal subunit protein uS12.